The following is a 91-amino-acid chain: Cell division topological specificity factor (91 aa).

This sequence belongs to the MinE family.

In terms of biological role, prevents the cell division inhibition by proteins MinC and MinD at internal division sites while permitting inhibition at polar sites. This ensures cell division at the proper site by restricting the formation of a division septum at the midpoint of the long axis of the cell. The sequence is that of Cell division topological specificity factor from Caldanaerobacter subterraneus subsp. tengcongensis (strain DSM 15242 / JCM 11007 / NBRC 100824 / MB4) (Thermoanaerobacter tengcongensis).